Here is a 45-residue protein sequence, read N- to C-terminus: Peroxidase 3 (45 aa).

This sequence belongs to the peroxidase family. Classical plant (class III) peroxidase subfamily. Requires heme b as cofactor. The cofactor is Ca(2+).

The protein resides in the secreted. The enzyme catalyses 2 a phenolic donor + H2O2 = 2 a phenolic radical donor + 2 H2O. In terms of biological role, removal of H(2)O(2), oxidation of toxic reductants, biosynthesis and degradation of lignin, suberization, auxin catabolism, response to environmental stresses such as wounding, pathogen attack and oxidative stress. These functions might be dependent on each isozyme/isoform in each plant tissue. The sequence is that of Peroxidase 3 from Capsicum annuum (Capsicum pepper).